A 743-amino-acid chain; its full sequence is NAD(P)H-quinone oxidoreductase subunit 5, chloroplastic (743 aa).

16 helical membrane passes run Trp-9–Phe-29, Trp-40–Ile-60, Ile-89–Ile-109, Phe-125–Ile-145, Ile-147–Thr-167, Gly-185–Phe-205, Asn-219–Ala-239, Thr-258–Ala-278, Leu-280–Ile-300, Leu-327–Ile-347, Ala-354–Phe-374, Thr-396–Ser-416, Trp-425–Tyr-445, Ile-546–Pro-566, Leu-607–Tyr-627, and Phe-721–Phe-741.

It belongs to the complex I subunit 5 family. As to quaternary structure, NDH is composed of at least 16 different subunits, 5 of which are encoded in the nucleus.

It localises to the plastid. The protein resides in the chloroplast thylakoid membrane. The catalysed reaction is a plastoquinone + NADH + (n+1) H(+)(in) = a plastoquinol + NAD(+) + n H(+)(out). It carries out the reaction a plastoquinone + NADPH + (n+1) H(+)(in) = a plastoquinol + NADP(+) + n H(+)(out). NDH shuttles electrons from NAD(P)H:plastoquinone, via FMN and iron-sulfur (Fe-S) centers, to quinones in the photosynthetic chain and possibly in a chloroplast respiratory chain. The immediate electron acceptor for the enzyme in this species is believed to be plastoquinone. Couples the redox reaction to proton translocation, and thus conserves the redox energy in a proton gradient. In Citrus sinensis (Sweet orange), this protein is NAD(P)H-quinone oxidoreductase subunit 5, chloroplastic (ndhF).